A 141-amino-acid polypeptide reads, in one-letter code: Hemoglobin subunit alpha (141 aa).

One can recognise a Globin domain in the interval 1 to 141 (VLSGEDKNNI…VSTVLTSKYR (141 aa)). Ser3 is subject to Phosphoserine. N6-succinyllysine is present on residues Lys7 and Lys11. Lys16 is modified (N6-acetyllysine; alternate). At Lys16 the chain carries N6-succinyllysine; alternate. Residue Tyr24 is modified to Phosphotyrosine. N6-succinyllysine is present on Lys40. Ser49 is modified (phosphoserine). Residue His58 participates in O2 binding. His87 is a heme b binding site. Ser102 bears the Phosphoserine mark. At Thr108 the chain carries Phosphothreonine. A phosphoserine mark is found at Ser124 and Ser131. Thr134 and Thr137 each carry phosphothreonine. Phosphoserine is present on Ser138.

It belongs to the globin family. In terms of assembly, heterotetramer of two alpha chains and two beta chains. As to expression, red blood cells.

Involved in oxygen transport from the lung to the various peripheral tissues. Its function is as follows. Hemopressin acts as an antagonist peptide of the cannabinoid receptor CNR1. Hemopressin-binding efficiently blocks cannabinoid receptor CNR1 and subsequent signaling. The polypeptide is Hemoglobin subunit alpha (HBA) (Ondatra zibethicus (Muskrat)).